A 305-amino-acid polypeptide reads, in one-letter code: N-acetylneuraminate lyase (305 aa).

Thr51 and Thr52 together coordinate aceneuramate. Tyr143 acts as the Proton donor in catalysis. Lys173 acts as the Schiff-base intermediate with substrate in catalysis. 5 residues coordinate aceneuramate: Thr175, Gly197, Asp199, Glu200, and Ser216.

The protein belongs to the DapA family. NanA subfamily. In terms of assembly, homotetramer.

Its subcellular location is the cytoplasm. The catalysed reaction is aceneuramate = aldehydo-N-acetyl-D-mannosamine + pyruvate. It functions in the pathway amino-sugar metabolism; N-acetylneuraminate degradation. Functionally, catalyzes the cleavage of N-acetylneuraminic acid (sialic acid) to form pyruvate and N-acetylmannosamine via a Schiff base intermediate. It prevents sialic acids from being recycled and returning to the cell surface. Involved in the N-glycolylneuraminic acid (Neu5Gc) degradation pathway. In Xenopus tropicalis (Western clawed frog), this protein is N-acetylneuraminate lyase.